The chain runs to 161 residues: Ubiquitin-conjugating enzyme E2Q-like protein 1 (161 aa).

The region spanning 1–154 (MKELQDIARL…VKTHEKYGWV (154 aa)) is the UBC core domain. The Glycyl thioester intermediate role is filled by Cys88.

This sequence belongs to the ubiquitin-conjugating enzyme family. Interacts with FBXW7.

It localises to the nucleus. The enzyme catalyses S-ubiquitinyl-[E1 ubiquitin-activating enzyme]-L-cysteine + [E2 ubiquitin-conjugating enzyme]-L-cysteine = [E1 ubiquitin-activating enzyme]-L-cysteine + S-ubiquitinyl-[E2 ubiquitin-conjugating enzyme]-L-cysteine.. It participates in protein modification; protein ubiquitination. Its function is as follows. Probable E2 ubiquitin-protein ligase that catalyzes the covalent attachment of ubiquitin to target proteins. May facilitate the monoubiquitination and degradation of MTOR and CCNE1 through interaction with FBXW7. In Mus musculus (Mouse), this protein is Ubiquitin-conjugating enzyme E2Q-like protein 1 (Ube2ql1).